The chain runs to 874 residues: Rho GTPase-activating protein 42 (874 aa).

The region spanning 7-262 (EFSDSYLDSP…MKSANQDYRP (256 aa)) is the BAR domain. Positions 225–261 (KQQLQFNLQNTRNNFESTRQEVERLMQRMKSANQDYR) form a coiled coil. The 110-residue stretch at 265–374 (QWTMEGYLYV…WLEAMDGKEP (110 aa)) folds into the PH domain. Tyr376 bears the Phosphotyrosine mark. The Rho-GAP domain maps to 376 to 572 (YTLPAIISKK…ILIEHYEKIF (197 aa)). A disordered region spans residues 575–720 (APDPSIPLPQ…GDVSPPIDLV (146 aa)). The span at 620–650 (DSYSSSPDSTPMGSIESLSSHSSEQNSTTKS) shows a compositional bias: low complexity. Residues 667 to 686 (TPSSSNGQKSLGLWTTSPES) show a composition bias toward polar residues. Phosphoserine is present on Ser683. Residues 687 to 697 (SSREDATKTDA) show a composition bias toward basic and acidic residues. Positions 700-711 (DCQSVASVTSPG) are enriched in polar residues. 4 positions are modified to phosphoserine: Ser740, Ser753, Ser756, and Ser811. Residues 749 to 762 (SYSGSIQSLTSVGS) are compositionally biased toward polar residues. Residues 749-777 (SYSGSIQSLTSVGSKETPKASPNPDLPPK) are disordered. Residues 816 to 874 (SSGRQAKAMYSCKAEHSHELSFPQGAIFSNVYPSVEPGWLKATYEGKTGLVPENYVVFL) enclose the SH3 domain. Residue Tyr870 is modified to Phosphotyrosine.

As to expression, highly and selectively expressed in smooth muscle cells.

Its function is as follows. May influence blood pressure by functioning as a GTPase-activating protein for RHOA in vascular smooth muscle. The chain is Rho GTPase-activating protein 42 from Homo sapiens (Human).